The chain runs to 427 residues: Septin-8 (427 aa).

The 267-residue stretch at 39-305 (QGFCFNILCV…ELYRRCKLEE (267 aa)) folds into the Septin-type G domain. A G1 motif region spans residues 49 to 56 (GETGIGKS). GTP is bound by residues 49–56 (GETGIGKS), glycine 104, 185–193 (KADTISKSE), glycine 239, and arginine 254. The tract at residues 101 to 104 (DTVG) is G3 motif. The segment at 184–187 (AKAD) is G4 motif. Residues 321 to 409 (QETYEAKRKE…KAAMEALQSQ (89 aa)) adopt a coiled-coil conformation. The disordered stretch occupies residues 373–427 (RVHQEESKKVEDKRRDLEEEMNSFNRRKAAMEALQSQSFQATSQQPLKKDKDRKN). Residues 374–389 (VHQEESKKVEDKRRDL) show a composition bias toward basic and acidic residues. A compositionally biased stretch (polar residues) spans 406–418 (LQSQSFQATSQQP).

It belongs to the TRAFAC class TrmE-Era-EngA-EngB-Septin-like GTPase superfamily. Septin GTPase family.

It is found in the cytoplasm. The protein resides in the cytoskeleton. The protein localises to the synapse. Its subcellular location is the cell projection. It localises to the axon. It is found in the cytoplasmic vesicle. The protein resides in the secretory vesicle. The protein localises to the synaptic vesicle membrane. Its subcellular location is the presynapse. This Xenopus tropicalis (Western clawed frog) protein is Septin-8.